Reading from the N-terminus, the 152-residue chain is Superoxide dismutase [Cu-Zn] 1 (152 aa).

3 residues coordinate Cu cation: H45, H47, and H62. C56 and C145 are disulfide-bonded. Residues H62, H70, H79, and D82 each coordinate Zn(2+). H119 contacts Cu cation.

It belongs to the Cu-Zn superoxide dismutase family. As to quaternary structure, homodimer. Requires Cu cation as cofactor. The cofactor is Zn(2+).

Its subcellular location is the cytoplasm. It carries out the reaction 2 superoxide + 2 H(+) = H2O2 + O2. In terms of biological role, destroys radicals which are normally produced within the cells and which are toxic to biological systems. In Solanum lycopersicum (Tomato), this protein is Superoxide dismutase [Cu-Zn] 1 (SODCC.1).